We begin with the raw amino-acid sequence, 136 residues long: 1,4-dihydroxy-2-naphthoyl-CoA hydrolase (136 aa).

Glu63 serves as the catalytic Nucleophile or proton acceptor. Residues Gly82, 89 to 92 (HVRS), and 106 to 111 (HLGSRH) contribute to the substrate site.

Belongs to the thioesterase PaaI family. Homotetramer. Dimer of dimers.

The catalysed reaction is 1,4-dihydroxy-2-naphthoyl-CoA + H2O = 1,4-dihydroxy-2-naphthoate + CoA + H(+). It functions in the pathway quinol/quinone metabolism; 1,4-dihydroxy-2-naphthoate biosynthesis; 1,4-dihydroxy-2-naphthoate from chorismate: step 7/7. The protein operates within quinol/quinone metabolism; menaquinone biosynthesis. Catalyzes the hydrolysis of 1,4-dihydroxy-2-naphthoyl-CoA (DHNA-CoA) to 1,4-dihydroxy-2-naphthoate (DHNA). Also shows significant activity toward a wide range of acyl-CoA thioesters, and minimal activity toward benzoyl-holoEntB. This Escherichia coli (strain K12) protein is 1,4-dihydroxy-2-naphthoyl-CoA hydrolase.